Reading from the N-terminus, the 114-residue chain is Probable non-functional T cell receptor beta variable 6-7 (114 aa).

Residues 1 to 21 (MSLGLLCCVAFSLLWAGPMNA) form the signal peptide. Residues 22–114 (GVTQTPKFHV…TSVYFCASSY (93 aa)) form the Ig-like domain. The cysteines at positions 42 and 110 are disulfide-linked. An N-linked (GlcNAc...) asparagine glycan is attached at Asn-84.

In terms of assembly, alpha-beta TR is a heterodimer composed of an alpha and beta chain; disulfide-linked. The alpha-beta TR is associated with the transmembrane signaling CD3 coreceptor proteins to form the TR-CD3 (TcR or TCR). The assembly of alpha-beta TR heterodimers with CD3 occurs in the endoplasmic reticulum where a single alpha-beta TR heterodimer associates with one CD3D-CD3E heterodimer, one CD3G-CD3E heterodimer and one CD247 homodimer forming a stable octameric structure. CD3D-CD3E and CD3G-CD3E heterodimers preferentially associate with TR alpha and TR beta chains, respectively. The association of the CD247 homodimer is the last step of TcR assembly in the endoplasmic reticulum and is required for transport to the cell surface.

It is found in the cell membrane. Functionally, probable non-functional open reading frame (ORF) of V region of the variable domain of T cell receptor (TR) beta chain. Non-functional ORF generally cannot participate in the synthesis of a productive T cell receptor (TR) chain due to altered V-(D)-J or switch recombination and/or splicing site (at mRNA level) and/or conserved amino acid change (protein level). Alpha-beta T cell receptors are antigen specific receptors which are essential to the immune response and are present on the cell surface of T lymphocytes. Recognize peptide-major histocompatibility (MH) (pMH) complexes that are displayed by antigen presenting cells (APC), a prerequisite for efficient T cell adaptive immunity against pathogens. Binding of alpha-beta TR to pMH complex initiates TR-CD3 clustering on the cell surface and intracellular activation of LCK that phosphorylates the ITAM motifs of CD3G, CD3D, CD3E and CD247 enabling the recruitment of ZAP70. In turn ZAP70 phosphorylates LAT, which recruits numerous signaling molecules to form the LAT signalosome. The LAT signalosome propagates signal branching to three major signaling pathways, the calcium, the mitogen-activated protein kinase (MAPK) kinase and the nuclear factor NF-kappa-B (NF-kB) pathways, leading to the mobilization of transcription factors that are critical for gene expression and essential for T cell growth and differentiation. The T cell repertoire is generated in the thymus, by V-(D)-J rearrangement. This repertoire is then shaped by intrathymic selection events to generate a peripheral T cell pool of self-MH restricted, non-autoaggressive T cells. Post-thymic interaction of alpha-beta TR with the pMH complexes shapes TR structural and functional avidity. This is Probable non-functional T cell receptor beta variable 6-7 from Homo sapiens (Human).